The chain runs to 130 residues: Calcium-binding protein KRP1 (130 aa).

The region spanning 72–107 (LTDEDVRCMIKEGDFDCDGALNQMEFCVLMFRLSPD) is the EF-hand domain. Positions 85, 87, 89, and 96 each coordinate Ca(2+).

Functionally, potential calcium sensor that binds calcium in vitro. The chain is Calcium-binding protein KRP1 from Arabidopsis thaliana (Mouse-ear cress).